The chain runs to 146 residues: Large ribosomal subunit protein uL15 (146 aa).

The disordered stretch occupies residues 1–55 (MGLRLNELSPGVGAKKTAQRRGRGIGSGLGKTGGRGVKGQKSRSGSSIRSGFEGG). Over residues 24–37 (GIGSGLGKTGGRGV) the composition is skewed to gly residues.

Belongs to the universal ribosomal protein uL15 family. In terms of assembly, part of the 50S ribosomal subunit.

Binds to the 23S rRNA. The protein is Large ribosomal subunit protein uL15 of Psychrobacter cryohalolentis (strain ATCC BAA-1226 / DSM 17306 / VKM B-2378 / K5).